The primary structure comprises 577 residues: MNIQALINDKVSQALEAAGAPAGSPAAVRQSAKPQFGDYQANGVMGVAKQLGTNPREFAQKVLDVLDLDGIASKTEIAGPGFINIFLSEEFLAKQAEAALADPRLGVASEEAQTIVADYSAPNVAKEMHVGHLRSTIIGDAVVRTLEFLGHKVIRANHIGDWGTQFGMLIANLERVQQESGEVSMELADLEGFYRESKKLYDEDEEFAVKARGYVVKLQSGDEFCAEMWKKLVDVTMIQNQRNYDRLNVSLSRDDVMGESMYNDMLPKIVADLKAQGLAVEDDGAQVVFLEEFKNKDGEPMGVIVQKRDGGFLYTTTDIACAKYRYEELGADRVLYFIDSRQHQHLMQAWTIVRKAGYVPESVSLEHHAFGMMLGKDGKPFKTRAGGTVRLADLLDEAEVRAAQLIESKNPELAEDEKKAIANTVAMAAVKYADLSKHRTTDYVFDWDNMLAFEGNTAPYMQYAYTRVASVFAKAGVSMDDLQGEIKITDEKEKALIAKLMQFEEAVQSVAREGQPHIMCSYLFELAGQFSSFYEACPILVAEDEAVKQSRLKLAALTAKTIKQGLSLLGIDTLERM.

The 'HIGH' region signature appears at 122 to 132; sequence PNVAKEMHVGH.

This sequence belongs to the class-I aminoacyl-tRNA synthetase family. As to quaternary structure, monomer.

The protein resides in the cytoplasm. It catalyses the reaction tRNA(Arg) + L-arginine + ATP = L-arginyl-tRNA(Arg) + AMP + diphosphate. This chain is Arginine--tRNA ligase, found in Vibrio vulnificus (strain CMCP6).